The primary structure comprises 321 residues: Endoglucanase 1 (321 aa).

The first 27 residues, 1–27, serve as a signal peptide directing secretion; sequence MSRKLRTLMAALCALPLAFAAAPPAHA. The active site involves Asp110. An intrachain disulfide couples Cys112 to Cys156. Asp149 serves as the catalytic Proton donor. Asp295 serves as the catalytic Nucleophile.

Belongs to the glycosyl hydrolase 6 (cellulase B) family.

The catalysed reaction is Endohydrolysis of (1-&gt;4)-beta-D-glucosidic linkages in cellulose, lichenin and cereal beta-D-glucans.. Its function is as follows. Implicated in the mechanism of induction exerted by cellobiose. The protein is Endoglucanase 1 (celA1) of Streptomyces halstedii.